The following is a 359-amino-acid chain: 4-galactosyl-N-acetylglucosaminide 3-alpha-L-fucosyltransferase FUT6 (359 aa).

Over 1-14 (MDPLGPAKPQWSWR) the chain is Cytoplasmic. The helical; Signal-anchor for type II membrane protein transmembrane segment at 15–34 (CCLTTLLFQLLMAVCFFSYL) threads the bilayer. At 35 to 359 (RVSQDDPTVY…QTRGIAAWFT (325 aa)) the chain is on the lumenal side. Residues Asn-46, Asn-91, Asn-153, and Asn-184 are each glycosylated (N-linked (GlcNAc...) asparagine). Residues 73–112 (KPIALPRCSEMVPGTADCNITADRKVYPQADAVIVHHREV) are determines site-specific fucosylation.

This sequence belongs to the glycosyltransferase 10 family. Homodimer and monomer. Monomer (secreted form). In terms of processing, N-glycosylated. Proteolytic cleavage releases a secreted glycoform of 43 kDa. In terms of tissue distribution, kidney, liver, colon, small intestine, bladder, uterus and salivary gland.

Its subcellular location is the golgi apparatus. It is found in the golgi stack membrane. The protein resides in the secreted. The catalysed reaction is a beta-D-galactosyl-(1-&gt;4)-N-acetyl-beta-D-glucosaminyl derivative + GDP-beta-L-fucose = a beta-D-galactosyl-(1-&gt;4)-[alpha-L-fucosyl-(1-&gt;3)]-N-acetyl-beta-D-glucosaminyl derivative + GDP + H(+). It catalyses the reaction an N-acetyl-alpha-neuraminyl-(2-&gt;3)-beta-D-galactosyl-(1-&gt;4)-N-acetyl-beta-D-glucosaminyl derivative + GDP-beta-L-fucose = an alpha-Neu5Ac-(2-&gt;3)-beta-D-Gal-(1-&gt;4)-[alpha-L-Fuc-(1-&gt;3)]-beta-D-GlcNAc derivative + GDP + H(+). It carries out the reaction an alpha-Neu5Ac-(2-&gt;3)-beta-D-Gal-(1-&gt;4)-beta-D-GlcNAc-(1-&gt;3)-beta-D-Gal-(1-&gt;4)-[alpha-L-Fuc-(1-&gt;3)]-beta-D-GlcNAc derivative + GDP-beta-L-fucose = an alpha-Neu5Ac-(2-&gt;3)-beta-D-Gal-(1-&gt;4)-[alpha-L-Fuc-(1-&gt;3)]-beta-D-GlcNAc-(1-&gt;3)-beta-D-Gal-(1-&gt;4)-[alpha-L-Fuc-(1-&gt;3)]-beta-D-GlcNAc derivative + GDP + H(+). The enzyme catalyses a neolactoside nLc6Cer + GDP-beta-L-fucose = beta-D-Gal-(1-&gt;4)-[alpha-L-Fuc-(1-&gt;3)]-beta-D-GlcNAc-(1-&gt;3)-beta-D-Gal-(1-&gt;4)-beta-D-GlcNAc-(1-&gt;3)-beta-D-Gal-(1-&gt;4)-beta-D-Glc-(1&lt;-&gt;1')-Cer + GDP + H(+). The catalysed reaction is a neolactoside nLc6Cer + GDP-beta-L-fucose = beta-D-galactosyl-(1-&gt;4)-N-acetyl-beta-D-glucosaminyl-(1-&gt;3)-beta-D-galactosyl-(1-&gt;4)-[alpha-L-fucosyl-(1-&gt;3)]-N-acetyl-beta-D-glucosaminyl-(1-&gt;3)-beta-D-galactosyl-(1-&gt;4)-beta-D-glucosyl-(1&lt;-&gt;1')-ceramide + GDP + H(+). It catalyses the reaction a neolactoside VI(3)-alpha-NeuNAc-nLc6Cer + GDP-beta-L-fucose = a neolactoside VI(3)-alpha-NeuAc,V(3)-alphaFuc-nLc6Cer + GDP + H(+). It carries out the reaction beta-D-galactosyl-(1-&gt;4)-N-acetyl-D-glucosamine + GDP-beta-L-fucose = beta-D-galactosyl-(1-&gt;4)-[alpha-L-fucosyl-(1-&gt;3)]-N-acetyl-D-glucosamine + GDP + H(+). The enzyme catalyses N-acetyl-alpha-neuraminosyl-(2-&gt;3)-beta-D-galactosyl-(1-&gt;4)-N-acetyl-beta-D-glucosamine + GDP-beta-L-fucose = N-acetyl-alpha-neuraminosyl-(2-&gt;3)-beta-D-galactosyl-(1-&gt;4)-[alpha-L-fucosyl-(1-&gt;3)]-N-acetyl-beta-D-glucosamine + GDP + H(+). The catalysed reaction is lactose + GDP-beta-L-fucose = beta-D-galactosyl-(1-&gt;4)-[alpha-L-fucosyl-(1-&gt;3)]-D-glucose + GDP + H(+). It catalyses the reaction alpha-L-Fuc-(1-&gt;2)-beta-D-Gal-(1-&gt;4)-D-Glc + GDP-beta-L-fucose = alpha-L-Fuc-(1-&gt;2)-beta-D-Gal-(1-&gt;4)-[alpha-L-Fuc-(1-&gt;3)]-D-Glc + GDP + H(+). It carries out the reaction a beta-D-galactosyl-(1-&gt;4)-N-acetyl-beta-D-6-sulfooxy-glucosaminyl derivative + GDP-beta-L-fucose = a beta-D-galactosyl-(1-&gt;4)-[alpha-L-fucosyl-(1-&gt;3)]-N-acetyl-beta-D-6-sulfooxy-glucosaminyl derivative + GDP + H(+). It participates in protein modification; protein glycosylation. Functionally, catalyzes the transfer of L-fucose, from a guanosine diphosphate-beta-L-fucose, to the N-acetyl glucosamine (GlcNAc) of a distal alpha2,3 sialylated lactosamine unit of a glycoprotein- or a glycolipid-linked sialopolylactosamines chain or of a distal or internal lactosamine unit of a neutral glycoprotein- or a glycolipid-linked polylactosamines chain through an alpha-1,3 glycosidic linkage and participates in surface expression of the sialyl Lewis X (sLe(x)), Lewis X (Le(x)) and non sialylated VIM2 determinants. Moreover transfers fucose to H-type 2 (Fucalpha1-2Galbeta1-4GlcNAc) chain acceptor substrates and participates in difucosylated sialyl Lewis x determinants. Also fucosylates a polylactosamine substrate having a 6 sulfate modification at the GlcNAc moiety and gives rise to sialyl and non-sialyl 6-sulfo lewis X. Does not have activity towards type 1 ((Galbeta1-3GlcNAc)) and H-type 1 chain (Fucalpha1-2Galbeta1-3GlcNAc) acceptors substrates. Does not have alpha(1,3)-fucosyltransferase activity. This is 4-galactosyl-N-acetylglucosaminide 3-alpha-L-fucosyltransferase FUT6 from Homo sapiens (Human).